The following is a 158-amino-acid chain: NAD(P)H-quinone oxidoreductase subunit J, chloroplastic (158 aa).

The protein belongs to the complex I 30 kDa subunit family. NDH is composed of at least 16 different subunits, 5 of which are encoded in the nucleus.

Its subcellular location is the plastid. It is found in the chloroplast thylakoid membrane. It catalyses the reaction a plastoquinone + NADH + (n+1) H(+)(in) = a plastoquinol + NAD(+) + n H(+)(out). It carries out the reaction a plastoquinone + NADPH + (n+1) H(+)(in) = a plastoquinol + NADP(+) + n H(+)(out). Functionally, NDH shuttles electrons from NAD(P)H:plastoquinone, via FMN and iron-sulfur (Fe-S) centers, to quinones in the photosynthetic chain and possibly in a chloroplast respiratory chain. The immediate electron acceptor for the enzyme in this species is believed to be plastoquinone. Couples the redox reaction to proton translocation, and thus conserves the redox energy in a proton gradient. The polypeptide is NAD(P)H-quinone oxidoreductase subunit J, chloroplastic (Solanum tuberosum (Potato)).